Consider the following 149-residue polypeptide: Arginine repressor (149 aa).

It belongs to the ArgR family.

The protein resides in the cytoplasm. The protein operates within amino-acid biosynthesis; L-arginine biosynthesis [regulation]. In terms of biological role, regulates arginine biosynthesis genes. The chain is Arginine repressor from Geobacillus kaustophilus (strain HTA426).